The following is a 394-amino-acid chain: Probable fimbrial assembly protein FimD, serogroup H1 (394 aa).

The chain is Probable fimbrial assembly protein FimD, serogroup H1 (fimD) from Dichelobacter nodosus (Bacteroides nodosus).